Reading from the N-terminus, the 184-residue chain is MAKYNEKELADTSKFLSFVLRHKPEAIGIVLDREGWADIDKLILCAQKAGKRLTRALLDTVVATSDKKRFSYSSDGRCIRAVQGHSTSQVAISFAEKTPPQFLYHGTASRFLDEIKKQGLIAGERHYVHLSADEATARKVGARHGSPVILTVKAQEMAKRGLPFWQAENGVWLTSTVAVEFLEW.

This sequence belongs to the KptA/TPT1 family.

Removes the 2'-phosphate from RNA via an intermediate in which the phosphate is ADP-ribosylated by NAD followed by a presumed transesterification to release the RNA and generate ADP-ribose 1''-2''-cyclic phosphate (APPR&gt;P). May function as an ADP-ribosylase. This chain is Probable RNA 2'-phosphotransferase, found in Escherichia coli O139:H28 (strain E24377A / ETEC).